Reading from the N-terminus, the 165-residue chain is Protein SprT (165 aa).

The SprT-like domain occupies 20 to 163 (EKLTQANLKL…RCVHCGEQLV (144 aa)). H78 is a Zn(2+) binding site. E79 is an active-site residue. H82 contributes to the Zn(2+) binding site.

This sequence belongs to the SprT family. Requires Zn(2+) as cofactor.

Its subcellular location is the cytoplasm. This Escherichia coli O139:H28 (strain E24377A / ETEC) protein is Protein SprT.